A 152-amino-acid chain; its full sequence is Transcriptional regulator MraZ (152 aa).

2 SpoVT-AbrB domains span residues 5 to 52 and 81 to 124; these read ATLV…PLPE and ASEC…DETT.

This sequence belongs to the MraZ family. Forms oligomers.

It localises to the cytoplasm. It is found in the nucleoid. In terms of biological role, negatively regulates its own expression and that of the subsequent genes in the proximal part of the division and cell wall (dcw) gene cluster. Acts by binding directly to DNA. May also regulate the expression of genes outside the dcw cluster. This Shigella sonnei (strain Ss046) protein is Transcriptional regulator MraZ.